A 241-amino-acid polypeptide reads, in one-letter code: ATP synthase subunit a (241 aa).

A run of 5 helical transmembrane segments spans residues 30 to 50, 91 to 111, 128 to 148, 193 to 213, and 214 to 234; these read GQVF…ISLG, FIGT…LIPW, INTT…AGLS, LVVG…VMFL, and GLFT…YYIG.

Belongs to the ATPase A chain family. In terms of assembly, F-type ATPases have 2 components, CF(1) - the catalytic core - and CF(0) - the membrane proton channel. CF(1) has five subunits: alpha(3), beta(3), gamma(1), delta(1), epsilon(1). CF(0) has four main subunits: a, b, b' and c.

It localises to the cellular thylakoid membrane. In terms of biological role, key component of the proton channel; it plays a direct role in the translocation of protons across the membrane. The polypeptide is ATP synthase subunit a (Prochlorococcus marinus (strain MIT 9515)).